The chain runs to 1435 residues: MTEQQKFKVLADQIKISNQLDAEILNSGELTRIDVSNKNRTWEFHITLPQFLAHEDYLLFINAIEQEFKDIANVTCRFTVTNGTNQDEHAIKYFGHCIDQTALSPKVKGQLKQKKLIMSGKVLKVMVSNDIERNHFDKACNGSLIKAFRNCGFDIDKIIFETNDNDQEQNLASLEAHIQEEDEQSARLATEKLEKMKAEKAKQQDNKQSAVDKCQIGKPIQIENIKPIESIIEEEFKVAIEGVIFDINLKELKSGRHIVEIKVTDYTDSLVLKMFTRKNKDDLEHFKALSVGKWVRAQGRIEEDTFIRDLVMMMSDIEEIKKATKKDKAEEKRVEFHLHTAMSQMDGIPNIGAYVKQAADWGHPAIAVTDHNVVQAFPDAHAAAEKHGIKMIYGMEGMLVDDGVPIAYKPQDVVLKDATYVVFDVETTGLSNQYDKIIELAAVKVHNGEIIDKFERFSNPHERLSETIINLTHITDDMLVDAPEIEEVLTEFKEWVGDAIFVAHNASFDMGFIDTGYERLGFGPSTNGVIDTLELSRTINTEYGKHGLNFLAKKYGVELTQHHRAIYDTEATAYIFIKMVQQMKELGVLNHNEINKKLSNEDAYKRARPSHVTLIVQNQQGLKNLFKIVSASLVKYFYRTPRIPRSLLDEYREGLLVGTACDEGELFTAVMQKDQSQVEKIAKYYDFIEIQPPALYQDLIDRELIRDTETLHEIYQRLIHAGDTAGIPVIATGNAHYLFEHDGIARKILIASQPGNPLNRSTLPEAHFRTTDEMLNEFHFLGEEKAHEIVVKNTNELADRIERVVPIKDELYTPRMEGANEEIRELSYANARKLYGEDLPQIVIDRLEKELKSIIGNGFAVIYLISQRLVKKSLDDGYLVGSRGSVGSSFVATMTEITEVNPLPPHYICPNCKTSEFFNDGSVGSGFDLPDKTCETCGAPLIKEGQDIPFEKFLGFKGDKVPDIDLNFSGEYQPNAHNYTKVLFGEDKVFRAGTIGTVAEKTAFGYVKGYLNDQGIHKRGAEIDRLVKGCTGVKATTGQHPGGIIVVPDYMDIYDFTPIQYPADDQNSAWMTTHFDFHSIHDNVLKLDILGHDDPTMIRMLQDLSGIDPKTIPVDDKEVMQIFSTPESLGVTEDEILCKTGTFGVPNSDRIRRQMLEDTKPTTFSELVQISGLSHGTDVWLGNAQELIKTGICDLSSVIGCRDDIMVYLMYAGLEPSMAFKIMESVRKGKGLTEEMIETMKENEVPDWYLDSCLKIKYIFPKAHAAAYVLMAVRIAYFKVHHPLYYYASYFTIRASDFDLITMIKDKTSIRNTVKDMYSRYMDLGKKEKDVLTVLEIMNEMAHRGYRMQPISLEKSQAFEFIIEGDTLIPPFISVPGLGENVAKRIVEARDDGPFLSKEDLNKKAGLYQKIIEYLDELGSLPNLPDKAQLSIFDM.

One can recognise an Exonuclease domain in the interval 420–576 (YVVFDVETTG…YDTEATAYIF (157 aa)).

Belongs to the DNA polymerase type-C family. PolC subfamily.

It is found in the cytoplasm. The catalysed reaction is DNA(n) + a 2'-deoxyribonucleoside 5'-triphosphate = DNA(n+1) + diphosphate. Required for replicative DNA synthesis. This DNA polymerase also exhibits 3' to 5' exonuclease activity. The chain is DNA polymerase III PolC-type from Staphylococcus aureus.